We begin with the raw amino-acid sequence, 620 residues long: Chaperone protein HscA homolog (620 aa).

The protein belongs to the heat shock protein 70 family.

Functionally, chaperone involved in the maturation of iron-sulfur cluster-containing proteins. Has a low intrinsic ATPase activity which is markedly stimulated by HscB. In Pseudomonas putida (strain ATCC 47054 / DSM 6125 / CFBP 8728 / NCIMB 11950 / KT2440), this protein is Chaperone protein HscA homolog.